The following is a 557-amino-acid chain: Neurofilament light polypeptide (557 aa).

Serine 2 carries the N-acetylserine modification. Positions 2–89 are head; that stretch reads SSYSYDPYYT…KIVRTQEKAQ (88 aa). The region spanning 86–396 is the IF rod domain; it reads EKAQLQDLND…KLLEGEETRL (311 aa). The coil 1A stretch occupies residues 90-121; that stretch reads LQDLNDRFANFIERVHELEQRNKVLEAELLLL. The interval 122-134 is linker 1; it reads RQKHNEPSRLRDL. The tract at residues 135 to 230 is coil 1B; the sequence is YEQEVRELRL…KVHEEELAQL (96 aa). The segment at 231–248 is linker 12; that stretch reads QSQVQYAQISLEVEVAKP. The segment at 249–267 is coil 2A; it reads DLSSALRDIRAQYEKLAAK. Residues 268–276 form a linker 2 region; sequence NMQSAEDWF. Positions 277-392 are coil 2B; that stretch reads KSRFTVLTQS…AAYRKLLEGE (116 aa). The interval 393–437 is tail, subdomain A; it reads ETRLSFSGVGAITSGYTQSAPVFGRSAYSLQSSSYMTSRAFPTYY. Positions 393–557 are tail; the sequence is ETRLSFSGVG…KKKKKKKKKK (165 aa). Residues 438 to 557 form a tail, subdomain B (acidic) region; the sequence is SSHVQEEQLD…KKKKKKKKKK (120 aa). Positions 452–557 are disordered; sequence IESSRAEEAK…KKKKKKKKKK (106 aa). Basic and acidic residues predominate over residues 453–464; the sequence is ESSRAEEAKAEA. Over residues 465 to 538 the composition is skewed to acidic residues; that stretch reads PEEEEEEAGE…GEGEEEEEGK (74 aa). Over residues 539–548 the composition is skewed to basic and acidic residues; the sequence is GEEPAEEESK.

This sequence belongs to the intermediate filament family. As to quaternary structure, forms homodimers (in vitro).

Its subcellular location is the cell projection. The protein localises to the axon. The protein resides in the cytoplasm. It localises to the cytoskeleton. Functionally, neurofilaments usually contain three intermediate filament proteins: NEFL, NEFM, and NEFH which are involved in the maintenance of neuronal caliber. May additionally cooperate with other neuronal intermediate filament proteins to form neuronal filamentous networks. The sequence is that of Neurofilament light polypeptide (nefl) from Xenopus tropicalis (Western clawed frog).